A 293-amino-acid polypeptide reads, in one-letter code: Elongation factor Ts (293 aa).

Residues 80 to 83 (TDFV) are involved in Mg(2+) ion dislocation from EF-Tu.

It belongs to the EF-Ts family.

The protein localises to the cytoplasm. In terms of biological role, associates with the EF-Tu.GDP complex and induces the exchange of GDP to GTP. It remains bound to the aminoacyl-tRNA.EF-Tu.GTP complex up to the GTP hydrolysis stage on the ribosome. The sequence is that of Elongation factor Ts from Janthinobacterium sp. (strain Marseille) (Minibacterium massiliensis).